Here is a 348-residue protein sequence, read N- to C-terminus: Type II methyltransferase M.BglI (348 aa).

This sequence belongs to the N(4)/N(6)-methyltransferase family.

The enzyme catalyses a 2'-deoxycytidine in DNA + S-adenosyl-L-methionine = an N(4)-methyl-2'-deoxycytidine in DNA + S-adenosyl-L-homocysteine + H(+). A beta subtype methylase, recognizes the double-stranded sequence 5'-GCCNNNNNGGC-3', methylates C-2 on both strands, and protects the DNA from cleavage by the BglI endonuclease. The chain is Type II methyltransferase M.BglI (bglIM) from Bacillus subtilis.